Here is a 193-residue protein sequence, read N- to C-terminus: Ribosome maturation factor RimM (193 aa).

A PRC barrel domain is found at 112–193 (VDEYYWIDLI…CITVDWGLDF (82 aa)).

Belongs to the RimM family. In terms of assembly, binds ribosomal protein uS19.

It is found in the cytoplasm. Functionally, an accessory protein needed during the final step in the assembly of 30S ribosomal subunit, possibly for assembly of the head region. Essential for efficient processing of 16S rRNA. May be needed both before and after RbfA during the maturation of 16S rRNA. It has affinity for free ribosomal 30S subunits but not for 70S ribosomes. The chain is Ribosome maturation factor RimM from Methylibium petroleiphilum (strain ATCC BAA-1232 / LMG 22953 / PM1).